Consider the following 151-residue polypeptide: Guanylate kinase homolog (151 aa).

Residues 1-141 form the Guanylate kinase-like domain; the sequence is MEREGVDYHY…AYSKLIQILQ (141 aa).

It belongs to the guanylate kinase family.

The polypeptide is Guanylate kinase homolog (Bos taurus (Bovine)).